A 567-amino-acid polypeptide reads, in one-letter code: DNA ligase B (567 aa).

The active-site N6-AMP-lysine intermediate is Lys132.

This sequence belongs to the NAD-dependent DNA ligase family. LigB subfamily.

The enzyme catalyses NAD(+) + (deoxyribonucleotide)n-3'-hydroxyl + 5'-phospho-(deoxyribonucleotide)m = (deoxyribonucleotide)n+m + AMP + beta-nicotinamide D-nucleotide.. Its function is as follows. Catalyzes the formation of phosphodiester linkages between 5'-phosphoryl and 3'-hydroxyl groups in double-stranded DNA using NAD as a coenzyme and as the energy source for the reaction. This chain is DNA ligase B, found in Yersinia pseudotuberculosis serotype IB (strain PB1/+).